Here is a 232-residue protein sequence, read N- to C-terminus: Aliphatic sulfonates import ATP-binding protein SsuB 2 (232 aa).

The ABC transporter domain occupies 1-216; sequence MDIRVDRKAF…PRDRRDPLLA (216 aa). 33–40 serves as a coordination point for ATP; that stretch reads GPSGCGKS.

This sequence belongs to the ABC transporter superfamily. Aliphatic sulfonates importer (TC 3.A.1.17.2) family. The complex is composed of two ATP-binding proteins (SsuB), two transmembrane proteins (SsuC) and a solute-binding protein (SsuA).

It localises to the cell inner membrane. The enzyme catalyses ATP + H2O + aliphatic sulfonate-[sulfonate-binding protein]Side 1 = ADP + phosphate + aliphatic sulfonateSide 2 + [sulfonate-binding protein]Side 1.. Part of the ABC transporter complex SsuABC involved in aliphatic sulfonates import. Responsible for energy coupling to the transport system. This Pseudomonas syringae pv. tomato (strain ATCC BAA-871 / DC3000) protein is Aliphatic sulfonates import ATP-binding protein SsuB 2.